We begin with the raw amino-acid sequence, 683 residues long: DNA ligase (683 aa).

Residues 36–40 (DAVYD), 85–86 (SL), and glutamate 121 contribute to the NAD(+) site. The active-site N6-AMP-lysine intermediate is lysine 123. NAD(+) contacts are provided by arginine 144, glutamate 180, lysine 296, and lysine 320. Zn(2+) is bound by residues cysteine 413, cysteine 416, cysteine 431, and cysteine 437. In terms of domain architecture, BRCT spans 605-683 (PSEGHLSGKV…ESGWRVLAGL (79 aa)).

Belongs to the NAD-dependent DNA ligase family. LigA subfamily. Mg(2+) serves as cofactor. Requires Mn(2+) as cofactor.

It catalyses the reaction NAD(+) + (deoxyribonucleotide)n-3'-hydroxyl + 5'-phospho-(deoxyribonucleotide)m = (deoxyribonucleotide)n+m + AMP + beta-nicotinamide D-nucleotide.. In terms of biological role, DNA ligase that catalyzes the formation of phosphodiester linkages between 5'-phosphoryl and 3'-hydroxyl groups in double-stranded DNA using NAD as a coenzyme and as the energy source for the reaction. It is essential for DNA replication and repair of damaged DNA. The sequence is that of DNA ligase from Gluconobacter oxydans (strain 621H) (Gluconobacter suboxydans).